We begin with the raw amino-acid sequence, 315 residues long: Cytoplasmic dynein intermediate light chain DYN3 (315 aa).

This sequence belongs to the dynein light intermediate chain DYN3 family. In terms of assembly, the cytoplasmic dynein is composed of at least two heavy chains and a number of intermediate and light chains.

The protein resides in the cytoplasm. The protein localises to the cytoskeleton. In terms of biological role, component of the cytoplasmic dynein which acts as a motor for the intracellular retrograde motility of vesicles and organelles along microtubules. May play an important role in the proper orientation of the mitotic spindle into the budding daughter cell yeast. Probably required for normal progression of the cell cycle. This Candida glabrata (strain ATCC 2001 / BCRC 20586 / JCM 3761 / NBRC 0622 / NRRL Y-65 / CBS 138) (Yeast) protein is Cytoplasmic dynein intermediate light chain DYN3 (DYN3).